The sequence spans 291 residues: 3-methyl-2-oxobutanoate hydroxymethyltransferase (291 aa).

A compositionally biased stretch (polar residues) spans 1–10 (MTQLSAAQTP). The segment at 1 to 20 (MTQLSAAQTPQPKPADGNRA) is disordered. Mg(2+) is bound by residues Asp-71 and Asp-110. 3-methyl-2-oxobutanoate contacts are provided by residues 71 to 72 (DS), Asp-110, and Lys-140. Residue Glu-142 coordinates Mg(2+). The active-site Proton acceptor is Glu-208.

The protein belongs to the PanB family. Homodecamer; pentamer of dimers. Mg(2+) serves as cofactor.

The protein localises to the cytoplasm. It carries out the reaction 3-methyl-2-oxobutanoate + (6R)-5,10-methylene-5,6,7,8-tetrahydrofolate + H2O = 2-dehydropantoate + (6S)-5,6,7,8-tetrahydrofolate. The protein operates within cofactor biosynthesis; (R)-pantothenate biosynthesis; (R)-pantoate from 3-methyl-2-oxobutanoate: step 1/2. Its function is as follows. Catalyzes the reversible reaction in which hydroxymethyl group from 5,10-methylenetetrahydrofolate is transferred onto alpha-ketoisovalerate to form ketopantoate. The chain is 3-methyl-2-oxobutanoate hydroxymethyltransferase from Streptomyces coelicolor (strain ATCC BAA-471 / A3(2) / M145).